We begin with the raw amino-acid sequence, 314 residues long: Homoserine O-succinyltransferase (314 aa).

Cysteine 142 acts as the Acyl-thioester intermediate in catalysis. Lysine 163 and serine 192 together coordinate substrate. Catalysis depends on histidine 235, which acts as the Proton acceptor. Residue glutamate 237 is part of the active site. Arginine 249 contacts substrate.

This sequence belongs to the MetA family.

It is found in the cytoplasm. It carries out the reaction L-homoserine + succinyl-CoA = O-succinyl-L-homoserine + CoA. Its pathway is amino-acid biosynthesis; L-methionine biosynthesis via de novo pathway; O-succinyl-L-homoserine from L-homoserine: step 1/1. Its function is as follows. Transfers a succinyl group from succinyl-CoA to L-homoserine, forming succinyl-L-homoserine. The polypeptide is Homoserine O-succinyltransferase (Shewanella sediminis (strain HAW-EB3)).